A 91-amino-acid polypeptide reads, in one-letter code: Early E3B 10.4 kDa protein (91 aa).

The first 22 residues, 1–22 (MIPRNFFFTILICAFNVCATFT), serve as a signal peptide directing secretion. The Lumenal portion of the chain corresponds to 23–34 (AVATASPDCIGP). The chain crosses the membrane as a helical span at residues 35–60 (FASYALFAFVTCICVCSIVCLVINFF). The Cytoplasmic portion of the chain corresponds to 61–91 (QLVDWIFVRIAYLRHHPEYRNQNVAALLRLI).

This sequence belongs to the adenoviridae E3B family.

It is found in the host endoplasmic reticulum membrane. Functionally, down-regulates the EGF receptor. This is Early E3B 10.4 kDa protein from Homo sapiens (Human).